Consider the following 565-residue polypeptide: Sulfite reductase [NADPH] hemoprotein beta-component (565 aa).

[4Fe-4S] cluster is bound by residues Cys429, Cys435, Cys474, and Cys478. Cys478 contributes to the siroheme binding site.

Belongs to the nitrite and sulfite reductase 4Fe-4S domain family. Alpha(8)-beta(8). The alpha component is a flavoprotein, the beta component is a hemoprotein. It depends on siroheme as a cofactor. Requires [4Fe-4S] cluster as cofactor.

The catalysed reaction is hydrogen sulfide + 3 NADP(+) + 3 H2O = sulfite + 3 NADPH + 4 H(+). Its pathway is sulfur metabolism; hydrogen sulfide biosynthesis; hydrogen sulfide from sulfite (NADPH route): step 1/1. In terms of biological role, component of the sulfite reductase complex that catalyzes the 6-electron reduction of sulfite to sulfide. This is one of several activities required for the biosynthesis of L-cysteine from sulfate. This Shewanella baltica (strain OS185) protein is Sulfite reductase [NADPH] hemoprotein beta-component.